A 430-amino-acid polypeptide reads, in one-letter code: Gamma-glutamyl phosphate reductase (430 aa).

It belongs to the gamma-glutamyl phosphate reductase family.

Its subcellular location is the cytoplasm. The enzyme catalyses L-glutamate 5-semialdehyde + phosphate + NADP(+) = L-glutamyl 5-phosphate + NADPH + H(+). It participates in amino-acid biosynthesis; L-proline biosynthesis; L-glutamate 5-semialdehyde from L-glutamate: step 2/2. Catalyzes the NADPH-dependent reduction of L-glutamate 5-phosphate into L-glutamate 5-semialdehyde and phosphate. The product spontaneously undergoes cyclization to form 1-pyrroline-5-carboxylate. The chain is Gamma-glutamyl phosphate reductase from Rhodopseudomonas palustris (strain BisA53).